The following is a 128-amino-acid chain: Lysozyme C-1 (128 aa).

Positions 1 to 128 (KVYDRCEFAR…VSQYIRGCKL (128 aa)) constitute a C-type lysozyme domain. Intrachain disulfides connect cysteine 6–cysteine 126, cysteine 30–cysteine 114, cysteine 63–cysteine 79, and cysteine 75–cysteine 93. Active-site residues include glutamate 35 and aspartate 51.

This sequence belongs to the glycosyl hydrolase 22 family. Monomer.

The protein localises to the secreted. It catalyses the reaction Hydrolysis of (1-&gt;4)-beta-linkages between N-acetylmuramic acid and N-acetyl-D-glucosamine residues in a peptidoglycan and between N-acetyl-D-glucosamine residues in chitodextrins.. Lysozymes have primarily a bacteriolytic function; those in tissues and body fluids are associated with the monocyte-macrophage system and enhance the activity of immunoagents. The protein is Lysozyme C-1 of Sus scrofa (Pig).